The following is a 325-amino-acid chain: DNA-directed RNA polymerase subunit alpha (325 aa).

The segment at 1 to 231 (MQTSLLKPKI…DQLSVFAALE (231 aa)) is alpha N-terminal domain (alpha-NTD). An alpha C-terminal domain (alpha-CTD) region spans residues 246–325 (IDPILLRPVD…ENWPPAGLDK (80 aa)).

It belongs to the RNA polymerase alpha chain family. In terms of assembly, homodimer. The RNAP catalytic core consists of 2 alpha, 1 beta, 1 beta' and 1 omega subunit. When a sigma factor is associated with the core the holoenzyme is formed, which can initiate transcription.

It catalyses the reaction RNA(n) + a ribonucleoside 5'-triphosphate = RNA(n+1) + diphosphate. Functionally, DNA-dependent RNA polymerase catalyzes the transcription of DNA into RNA using the four ribonucleoside triphosphates as substrates. This chain is DNA-directed RNA polymerase subunit alpha, found in Paraburkholderia phymatum (strain DSM 17167 / CIP 108236 / LMG 21445 / STM815) (Burkholderia phymatum).